The chain runs to 461 residues: Cysteine--tRNA ligase (461 aa).

A Zn(2+)-binding site is contributed by C28. A 'HIGH' region motif is present at residues 30 to 40 (ITVYDLCHIGH). Zn(2+) contacts are provided by C209, H234, and E238. The short motif at 266 to 270 (KMSKS) is the 'KMSKS' region element. Residue K269 participates in ATP binding.

Belongs to the class-I aminoacyl-tRNA synthetase family. Monomer. Requires Zn(2+) as cofactor.

The protein resides in the cytoplasm. The catalysed reaction is tRNA(Cys) + L-cysteine + ATP = L-cysteinyl-tRNA(Cys) + AMP + diphosphate. The polypeptide is Cysteine--tRNA ligase (Enterobacter sp. (strain 638)).